Reading from the N-terminus, the 414-residue chain is Serine hydroxymethyltransferase (414 aa).

(6S)-5,6,7,8-tetrahydrofolate is bound by residues Leu117 and 121–123; that span reads GHL. Lys226 carries the post-translational modification N6-(pyridoxal phosphate)lysine.

The protein belongs to the SHMT family. As to quaternary structure, homodimer. Pyridoxal 5'-phosphate serves as cofactor.

It localises to the cytoplasm. It catalyses the reaction (6R)-5,10-methylene-5,6,7,8-tetrahydrofolate + glycine + H2O = (6S)-5,6,7,8-tetrahydrofolate + L-serine. It participates in one-carbon metabolism; tetrahydrofolate interconversion. The protein operates within amino-acid biosynthesis; glycine biosynthesis; glycine from L-serine: step 1/1. Functionally, catalyzes the reversible interconversion of serine and glycine with tetrahydrofolate (THF) serving as the one-carbon carrier. This reaction serves as the major source of one-carbon groups required for the biosynthesis of purines, thymidylate, methionine, and other important biomolecules. Also exhibits THF-independent aldolase activity toward beta-hydroxyamino acids, producing glycine and aldehydes, via a retro-aldol mechanism. This Dictyoglomus thermophilum (strain ATCC 35947 / DSM 3960 / H-6-12) protein is Serine hydroxymethyltransferase.